We begin with the raw amino-acid sequence, 320 residues long: Malate dehydrogenase (320 aa).

NAD(+) is bound by residues glycine 10–glycine 15 and aspartate 34. Residues arginine 83 and arginine 89 each contribute to the substrate site. Residues asparagine 96 and isoleucine 119–asparagine 121 contribute to the NAD(+) site. Substrate contacts are provided by asparagine 121 and arginine 152. Histidine 176 acts as the Proton acceptor in catalysis.

The protein belongs to the LDH/MDH superfamily. MDH type 3 family.

It catalyses the reaction (S)-malate + NAD(+) = oxaloacetate + NADH + H(+). Catalyzes the reversible oxidation of malate to oxaloacetate. The sequence is that of Malate dehydrogenase from Brucella canis (strain ATCC 23365 / NCTC 10854 / RM-666).